A 555-amino-acid polypeptide reads, in one-letter code: Suppressor of tumorigenicity 7 protein-like (555 aa).

4 helical membrane passes run 32–52 (APWARGLLAVAAGLGLFYAAL), 76–96 (FYFALTVTSSFISGLIFVFEW), 504–524 (LPFFIHFTAGLCSFSAMLALL), and 531–551 (LMVVFAKAVLRVLWPVSAPSV).

Belongs to the ST7 family.

The protein localises to the membrane. This chain is Suppressor of tumorigenicity 7 protein-like (ST7L), found in Gallus gallus (Chicken).